Consider the following 275-residue polypeptide: Large ribosomal subunit protein uL2 (275 aa).

Residues 223-275 (VAMNPVDHPHGGGEGRTSGGRHPVTPWGVPTKGYKTRSNKRTDKYIVRRRNKK) form a disordered region.

This sequence belongs to the universal ribosomal protein uL2 family. Part of the 50S ribosomal subunit. Forms a bridge to the 30S subunit in the 70S ribosome.

Its function is as follows. One of the primary rRNA binding proteins. Required for association of the 30S and 50S subunits to form the 70S ribosome, for tRNA binding and peptide bond formation. It has been suggested to have peptidyltransferase activity; this is somewhat controversial. Makes several contacts with the 16S rRNA in the 70S ribosome. This chain is Large ribosomal subunit protein uL2, found in Shewanella loihica (strain ATCC BAA-1088 / PV-4).